We begin with the raw amino-acid sequence, 181 residues long: Adenine phosphoribosyltransferase (181 aa).

This sequence belongs to the purine/pyrimidine phosphoribosyltransferase family. In terms of assembly, homodimer.

It localises to the cytoplasm. The enzyme catalyses AMP + diphosphate = 5-phospho-alpha-D-ribose 1-diphosphate + adenine. It functions in the pathway purine metabolism; AMP biosynthesis via salvage pathway; AMP from adenine: step 1/1. In terms of biological role, catalyzes a salvage reaction resulting in the formation of AMP, that is energically less costly than de novo synthesis. In Pseudoalteromonas translucida (strain TAC 125), this protein is Adenine phosphoribosyltransferase.